Here is a 198-residue protein sequence, read N- to C-terminus: ATP-dependent Clp protease proteolytic subunit (198 aa).

The active-site Nucleophile is Ser-101. His-126 is an active-site residue.

This sequence belongs to the peptidase S14 family. Component of the chloroplastic Clp protease core complex.

The protein resides in the plastid. It localises to the chloroplast stroma. It carries out the reaction Hydrolysis of proteins to small peptides in the presence of ATP and magnesium. alpha-casein is the usual test substrate. In the absence of ATP, only oligopeptides shorter than five residues are hydrolyzed (such as succinyl-Leu-Tyr-|-NHMec, and Leu-Tyr-Leu-|-Tyr-Trp, in which cleavage of the -Tyr-|-Leu- and -Tyr-|-Trp bonds also occurs).. Its function is as follows. Cleaves peptides in various proteins in a process that requires ATP hydrolysis. Has a chymotrypsin-like activity. Plays a major role in the degradation of misfolded proteins. This chain is ATP-dependent Clp protease proteolytic subunit, found in Solanum bulbocastanum (Wild potato).